The chain runs to 663 residues: tRNA (guanine(26)-N(2))-dimethyltransferase (663 aa).

The N-terminal 16 residues, 1 to 16 (MSLARTILWLSRPLRP), are a transit peptide targeting the mitochondrion. The region spanning 56 to 498 (ATVTEGAAKI…APPEALWDIM (443 aa)) is the Trm1 methyltransferase domain. An S-adenosyl-L-methionine-binding site is contributed by arginine 83. Residue serine 121 is modified to Phosphoserine. Residues arginine 165 and aspartate 183 each coordinate S-adenosyl-L-methionine. Zn(2+)-binding residues include cysteine 347, cysteine 350, cysteine 383, and cysteine 386. Residue serine 516 is modified to Phosphoserine. A disordered region spans residues 534-574 (IREDANPSSRQRGLKRFQANPEANWGPRPRARPGGKAASED). The Nuclear localization signal signature appears at 540-572 (PSSRQRGLKRFQANPEANWGPRPRARPGGKAAS). A C3H1-type zinc finger spans residues 599-626 (RLKTFPCKRFKEGTCQLGDQCCYSHSPA). Serine 624 bears the Phosphoserine mark. The disordered stretch occupies residues 632–663 (GDIPIEECPETTTKISPGPKAAAGGIPGPGVD).

It belongs to the class I-like SAM-binding methyltransferase superfamily. Trm1 family.

It is found in the mitochondrion. It localises to the nucleus. The protein resides in the cytoplasm. It carries out the reaction guanosine(26) in tRNA + 2 S-adenosyl-L-methionine = N(2)-dimethylguanosine(26) in tRNA + 2 S-adenosyl-L-homocysteine + 2 H(+). In terms of biological role, dimethylates a single guanine residue at position 26 of most nuclear- and mitochondrial-encoded tRNAs using S-adenosyl-L-methionine as donor of the methyl groups. tRNA guanine(26)-dimethylation is required for redox homeostasis and ensure proper cellular proliferation and oxidative stress survival. This Mus musculus (Mouse) protein is tRNA (guanine(26)-N(2))-dimethyltransferase.